The sequence spans 456 residues: DEAD-box ATP-dependent RNA helicase 10 (456 aa).

Residues 9–37 (KTFAELGVREELVKACERLGWKNPSKIQA) carry the Q motif motif. The Helicase ATP-binding domain occupies 40–223 (LPFALEGKDV…RACLRNPVKI (184 aa)). An ATP-binding site is contributed by 53–60 (AQTGSGKT). The DEAD box signature appears at 171–174 (DEAD). One can recognise a Helicase C-terminal domain in the interval 250–394 (YLVYILSEMP…EYPAEEDEVL (145 aa)). Residues 407–456 (SAMNMKESGGRKRRGEDDEESERFLGGNKDRGNKERGGNKDKKSSKKFKR) form a disordered region. Basic and acidic residues predominate over residues 434 to 448 (NKDRGNKERGGNKDK).

The protein belongs to the DEAD box helicase family. DDX47/RRP3 subfamily. Expressed in all tissues and organs examined including root, cotyledon, first and second leaves, third and fourth leaves, fifth and sixth leaves, shoot apex, flower, flower bud, cauline leaf and rosette leaves.

The protein localises to the nucleus. The protein resides in the nucleolus. It carries out the reaction ATP + H2O = ADP + phosphate + H(+). In terms of biological role, involved in leaf polarity establishment by functioning cooperatively with AS2 to repress abaxial genes ARF3, ARF4, KAN1, KAN2, YAB1 and YAB5, and the knox homeobox genes KNAT1, KNAT2, KNAT6, and STM to promote adaxial development in leaf primordia at shoot apical meristems at high temperatures. Involved in the processing of pre-rRNA intermediates at high temperatures. In Arabidopsis thaliana (Mouse-ear cress), this protein is DEAD-box ATP-dependent RNA helicase 10 (RH10).